A 268-amino-acid chain; its full sequence is Taurine import ATP-binding protein TauB (268 aa).

Residues 4-236 enclose the ABC transporter domain; the sequence is LSIENISMRF…MGVNADLREV (233 aa). Residue 41–48 coordinates ATP; sequence GPSGCGKT.

The protein belongs to the ABC transporter superfamily. Taurine importer (TC 3.A.1.17.1) family. The complex is composed of two ATP-binding proteins (TauB), two transmembrane proteins (TauC) and a solute-binding protein (TauA).

Its subcellular location is the cell inner membrane. The catalysed reaction is taurine(out) + ATP + H2O = taurine(in) + ADP + phosphate + H(+). Its function is as follows. Part of the ABC transporter complex TauABC involved in taurine import. Responsible for energy coupling to the transport system. The protein is Taurine import ATP-binding protein TauB of Ruegeria pomeroyi (strain ATCC 700808 / DSM 15171 / DSS-3) (Silicibacter pomeroyi).